The primary structure comprises 451 residues: Gamma-aminobutyric acid receptor subunit alpha-2 (451 aa).

A signal peptide spans Met1 to Ala28. Residues Asn29 to Lys249 are Extracellular-facing. Asn38 carries an N-linked (GlcNAc...) asparagine glycan. Arg94 provides a ligand contact to 4-aminobutanoate. Asn138 carries an N-linked (GlcNAc...) asparagine glycan. Thr157 provides a ligand contact to 4-aminobutanoate. Cys166 and Cys180 are oxidised to a cystine. Residues Ile250 to Val270 form a helical membrane-spanning segment. Over Ser271–Pro280 the chain is Cytoplasmic. The chain crosses the membrane as a helical span at residues Ala281–Ala300. The Extracellular segment spans residues Arg301–Thr311. A helical transmembrane segment spans residues Ala312 to Ala332. Topologically, residues Thr333–Met420 are cytoplasmic. Residues Ser421–Leu441 traverse the membrane as a helical segment. Topologically, residues Asn442–Pro451 are extracellular.

It belongs to the ligand-gated ion channel (TC 1.A.9) family. Gamma-aminobutyric acid receptor (TC 1.A.9.5) subfamily. GABRA2 sub-subfamily. In terms of assembly, heteropentamer, formed by a combination of alpha (GABRA1-6), beta (GABRB1-3), gamma (GABRG1-3), delta (GABRD), epsilon (GABRE), rho (GABRR1-3), pi (GABRP) and theta (GABRQ) subunits, each subunit exhibiting distinct physiological and pharmacological properties. Interacts with UBQLN1. Interacts with KIF21B. Interacts with LHFPL4. Interacts with SHISA7; interaction leads to the regulation of GABA(A) receptor trafficking, channel deactivation kinetics and pharmacology. In terms of processing, glycosylated.

The protein localises to the postsynaptic cell membrane. It localises to the cell membrane. The protein resides in the cytoplasmic vesicle membrane. Its subcellular location is the cell projection. It is found in the dendrite. The enzyme catalyses chloride(in) = chloride(out). Its activity is regulated as follows. Activated by pentobarbital. Inhibited by the antagonist bicuculline. Its function is as follows. Alpha subunit of the heteropentameric ligand-gated chloride channel gated by gamma-aminobutyric acid (GABA), a major inhibitory neurotransmitter in the brain. GABA-gated chloride channels, also named GABA(A) receptors (GABAAR), consist of five subunits arranged around a central pore and contain GABA active binding site(s) located at the alpha and beta subunit interface(s). When activated by GABA, GABAARs selectively allow the flow of chloride anions across the cell membrane down their electrochemical gradient. Chloride influx into the postsynaptic neuron following GABAAR opening decreases the neuron ability to generate a new action potential, thereby reducing nerve transmission. The alpha-2 subunit exhibits synaptogenic activity together with beta-2 and very little to no activity together with beta-3, the gamma-2 subunit being necessary but not sufficient to induce rapid synaptic contacts formation. The chain is Gamma-aminobutyric acid receptor subunit alpha-2 (GABRA2) from Pongo abelii (Sumatran orangutan).